The chain runs to 211 residues: Transcriptional regulatory protein RcsA (211 aa).

Positions 135-200 (SEVHPFTLSQ…VIYHVVRLTD (66 aa)) constitute an HTH luxR-type domain. A DNA-binding region (H-T-H motif) is located at residues 159–178 (TIQISDKMQIKAKTVSSHKG).

This sequence belongs to the RcsA family.

Component of the Rcs signaling system, which controls transcription of numerous genes. Binds to DNA to regulate expression of genes. In Erwinia amylovora (Fire blight bacteria), this protein is Transcriptional regulatory protein RcsA.